A 567-amino-acid chain; its full sequence is Proline--tRNA ligase (567 aa).

The protein belongs to the class-II aminoacyl-tRNA synthetase family. ProS type 1 subfamily. Homodimer.

The protein localises to the cytoplasm. It catalyses the reaction tRNA(Pro) + L-proline + ATP = L-prolyl-tRNA(Pro) + AMP + diphosphate. Its function is as follows. Catalyzes the attachment of proline to tRNA(Pro) in a two-step reaction: proline is first activated by ATP to form Pro-AMP and then transferred to the acceptor end of tRNA(Pro). As ProRS can inadvertently accommodate and process non-cognate amino acids such as alanine and cysteine, to avoid such errors it has two additional distinct editing activities against alanine. One activity is designated as 'pretransfer' editing and involves the tRNA(Pro)-independent hydrolysis of activated Ala-AMP. The other activity is designated 'posttransfer' editing and involves deacylation of mischarged Ala-tRNA(Pro). The misacylated Cys-tRNA(Pro) is not edited by ProRS. This is Proline--tRNA ligase from Streptomyces griseus subsp. griseus (strain JCM 4626 / CBS 651.72 / NBRC 13350 / KCC S-0626 / ISP 5235).